A 232-amino-acid chain; its full sequence is Fibrillarin-like rRNA/tRNA 2'-O-methyltransferase (232 aa).

Residues 89 to 90 (TT), 108 to 109 (EF), 133 to 134 (DA), and 153 to 156 (DIAQ) contribute to the S-adenosyl-L-methionine site.

The protein belongs to the methyltransferase superfamily. Fibrillarin family. In terms of assembly, interacts with nop5. Component of box C/D small ribonucleoprotein (sRNP) particles that contain rpl7ae, FlpA and nop5, plus a guide RNA.

Functionally, involved in pre-rRNA and tRNA processing. Utilizes the methyl donor S-adenosyl-L-methionine to catalyze the site-specific 2'-hydroxyl methylation of ribose moieties in rRNA and tRNA. Site specificity is provided by a guide RNA that base pairs with the substrate. Methylation occurs at a characteristic distance from the sequence involved in base pairing with the guide RNA. This is Fibrillarin-like rRNA/tRNA 2'-O-methyltransferase from Saccharolobus islandicus (strain M.16.27) (Sulfolobus islandicus).